Reading from the N-terminus, the 245-residue chain is Large ribosomal subunit protein uL3 (245 aa).

At Gln151 the chain carries N5-methylglutamine. The tract at residues 214–245 (KDAPQPGKYRLANSAAPQPAEADAASDTGAQA) is disordered. The span at 225-245 (ANSAAPQPAEADAASDTGAQA) shows a compositional bias: low complexity.

It belongs to the universal ribosomal protein uL3 family. In terms of assembly, part of the 50S ribosomal subunit. Forms a cluster with proteins L14 and L19. Methylated by PrmB.

One of the primary rRNA binding proteins, it binds directly near the 3'-end of the 23S rRNA, where it nucleates assembly of the 50S subunit. This chain is Large ribosomal subunit protein uL3, found in Methylocella silvestris (strain DSM 15510 / CIP 108128 / LMG 27833 / NCIMB 13906 / BL2).